The chain runs to 1427 residues: ATP-binding cassette transporter abc1 (1427 aa).

A helical transmembrane segment spans residues 26–46 (LLLFYLSLFSLTNLFLIQKLF). Residue N49 is glycosylated (N-linked (GlcNAc...) asparagine). 9 consecutive transmembrane segments (helical) span residues 63–83 (CLLEYIQIILSIVSAALSFYL), 87–107 (AVWWAIRTITHLEIVGLNILS), 115–135 (LFSWISVANAFGLLLLRLISI), 155–175 (LLLPLAYNITLFLLVIIPLFF), 197–217 (CSIFSLIFTYGWLNGIIWKSW), 262–282 (ILLMVFLSVLVSSTLFVTPLA), 298–318 (GNSPFLWVFVLLIGPYLASVV), 345–367 (VLTSKTLFVAVDGSKINLDYVYN), and 397–417 (MYFLYQLLGWSAYVGLLLAIL). The ABC transmembrane type-1 1 domain occupies 262-549 (ILLMVFLSVL…LASVSRQFIQ (288 aa)). Residue N437 is glycosylated (N-linked (GlcNAc...) asparagine). Transmembrane regions (helical) follow at residues 489 to 509 (IIFKSGMKIAPFISMFITFAI) and 513 to 533 (IMGHQLTPATAFTSISMFGLL). 3 N-linked (GlcNAc...) asparagine glycosylation sites follow: N567, N581, and N601. Positions 579–807 (FENTSLSWSP…PSTFFSSNTK (229 aa)) constitute an ABC transporter 1 domain. Residues 609 to 629 (FTLVVGSTGSGKSTLAMALLG) traverse the membrane as a helical segment. 614-621 (GSTGSGKS) contributes to the ATP binding site. Residues N658 and N703 are each glycosylated (N-linked (GlcNAc...) asparagine). The helical transmembrane segment at 760 to 780 (IILFTHNVSLCLPIAENVIVL) threads the bilayer. Residues N782 and N842 are each glycosylated (N-linked (GlcNAc...) asparagine). The ABC transmembrane type-1 2 domain occupies 862–1142 (ILGSILLVMM…FVRANNEILT (281 aa)). Transmembrane regions (helical) follow at residues 866–886 (ILLVMMSQVSLASIHFWIALW), 896–916 (LPSSFSFLWGYAILLFIYFLM), and 973–993 (LLWASLEGMLLCVMAILITML). N994 is a glycosylation site (N-linked (GlcNAc...) asparagine). A run of 3 helical transmembrane segments spans residues 995-1015 (VTLVMPIFMVPAAFVSLLVYL), 1086-1106 (LAIRTDGISGLVGFSTGLIAL), and 1114-1134 (GLVGFSLNSAIGFNISVLVFV). N-linked (GlcNAc...) asparagine glycans are attached at residues N1161 and N1184. The 243-residue stretch at 1180–1422 (VSIKNLTVSY…RRAFWKMCKE (243 aa)) folds into the ABC transporter 2 domain. ATP is bound at residue 1214-1221 (GRTGSGKS). A helical membrane pass occupies residues 1223–1243 (MGLTLLRFTMIMSGAVEVDGI). N1324 is a glycosylation site (N-linked (GlcNAc...) asparagine).

This sequence belongs to the ABC transporter superfamily. ABCC family. Conjugate transporter (TC 3.A.1.208) subfamily.

The protein localises to the membrane. In Schizosaccharomyces pombe (strain 972 / ATCC 24843) (Fission yeast), this protein is ATP-binding cassette transporter abc1 (abc1).